A 453-amino-acid polypeptide reads, in one-letter code: UDP-N-acetylmuramate--L-alanine ligase (453 aa).

An ATP-binding site is contributed by 112-118 (GTHGKTT).

The protein belongs to the MurCDEF family.

It is found in the cytoplasm. It catalyses the reaction UDP-N-acetyl-alpha-D-muramate + L-alanine + ATP = UDP-N-acetyl-alpha-D-muramoyl-L-alanine + ADP + phosphate + H(+). It participates in cell wall biogenesis; peptidoglycan biosynthesis. Cell wall formation. This chain is UDP-N-acetylmuramate--L-alanine ligase, found in Bdellovibrio bacteriovorus (strain ATCC 15356 / DSM 50701 / NCIMB 9529 / HD100).